The primary structure comprises 616 residues: KIF-binding protein (616 aa).

The segment at 52-78 (EEEEESEAEGKEERRDGPESGGRRGES) is disordered. A compositionally biased stretch (basic and acidic residues) spans 59 to 78 (AEGKEERRDGPESGGRRGES).

This sequence belongs to the KIF-binding protein family.

Its subcellular location is the cytoplasm. The protein resides in the cytoskeleton. Its function is as follows. Activator of KIF1B plus-end-directed microtubule motor activity. Required for organization of axonal microtubules, and axonal outgrowth and maintenance during peripheral and central nervous system development. This chain is KIF-binding protein, found in Xenopus tropicalis (Western clawed frog).